The sequence spans 209 residues: Probable L-serine dehydratase, alpha chain (209 aa).

Belongs to the iron-sulfur dependent L-serine dehydratase family. In terms of assembly, heterodimer of an alpha chain and a beta chain. [4Fe-4S] cluster is required as a cofactor.

The enzyme catalyses L-serine = pyruvate + NH4(+). It functions in the pathway carbohydrate biosynthesis; gluconeogenesis. This Latilactobacillus sakei (Lactobacillus sakei) protein is Probable L-serine dehydratase, alpha chain (sdhA).